The primary structure comprises 178 residues: Ribosome maturation factor RimM (178 aa).

Residues A101 to F178 enclose the PRC barrel domain.

Belongs to the RimM family. Binds ribosomal protein uS19.

Its subcellular location is the cytoplasm. An accessory protein needed during the final step in the assembly of 30S ribosomal subunit, possibly for assembly of the head region. Essential for efficient processing of 16S rRNA. May be needed both before and after RbfA during the maturation of 16S rRNA. It has affinity for free ribosomal 30S subunits but not for 70S ribosomes. The sequence is that of Ribosome maturation factor RimM from Pseudomonas fluorescens (strain Pf0-1).